Consider the following 175-residue polypeptide: Major MR/P fimbria protein (175 aa).

The N-terminal stretch at 1–23 is a signal peptide; that stretch reads MKLNKLALVLGLGLSVVAGSALA. Residues cysteine 42 and cysteine 81 are joined by a disulfide bond.

It belongs to the fimbrial protein family.

It localises to the fimbrium. Major structural component of mannose-resistant/proteus-like fimbriae of P.mirabilis. This Proteus mirabilis (strain HI4320) protein is Major MR/P fimbria protein (mrpA).